The chain runs to 462 residues: RuvB-like 2 (462 aa).

76 to 83 (GQPGTGKT) is an ATP binding site.

It belongs to the RuvB family. Forms homohexameric rings. Can form a dodecamer with ruvbl2 made of two stacked hexameric rings. Is a component of the RNA polymerase II holoenzyme complex. Component of the chromatin-remodeling Ino80 complex. Component of some MLL1/MLL complex.

Its subcellular location is the nucleus. It localises to the dynein axonemal particle. It catalyses the reaction ATP + H2O = ADP + phosphate + H(+). Functionally, has single-stranded DNA-stimulated ATPase and ATP-dependent DNA helicase (5' to 3') activity suggesting a role in nuclear processes such as recombination and transcription. Proposed core component of the chromatin remodeling INO80 complex which exhibits DNA- and nucleosome-activated ATPase activity and catalyzes ATP-dependent nucleosome sliding. Involved in the endoplasmic reticulum (ER)-associated degradation (ERAD) pathway where it negatively regulates expression of ER stress response genes. The chain is RuvB-like 2 (ruvbl2) from Xenopus laevis (African clawed frog).